The primary structure comprises 80 residues: U6-ctenitoxin-Pn1a (80 aa).

A signal peptide spans 1–21 (MWLKIQVFVLALALITLGIQA). Residues 22 to 37 (EPNSGPNNPLIQEEAR) constitute a propeptide that is removed on maturation. 4 cysteine pairs are disulfide-bonded: cysteine 39–cysteine 54, cysteine 46–cysteine 59, cysteine 53–cysteine 69, and cysteine 61–cysteine 67. The propeptide occupies 72–80 (TLGDLFGRR).

The protein belongs to the neurotoxin 02 (plectoxin) family. 01 (Tx3) subfamily. In terms of tissue distribution, expressed by the venom gland.

It localises to the secreted. In terms of biological role, antagonist of L-type calcium channels (Cav1/CACNA1). In Phoneutria nigriventer (Brazilian armed spider), this protein is U6-ctenitoxin-Pn1a.